We begin with the raw amino-acid sequence, 424 residues long: D-inositol 3-phosphate glycosyltransferase (424 aa).

Histidine 20 serves as a coordination point for 1D-myo-inositol 3-phosphate. UDP-N-acetyl-alpha-D-glucosamine-binding positions include 26 to 27 and glycine 34; that span reads QP. Residues 31–36, lysine 89, tyrosine 122, threonine 146, and arginine 166 each bind 1D-myo-inositol 3-phosphate; that span reads DAGGMN. 3 residues coordinate UDP-N-acetyl-alpha-D-glucosamine: arginine 240, lysine 245, and methionine 306. Tyrosine 315, arginine 316, and alanine 318 together coordinate Mg(2+). Residues glutamate 328 and glutamate 336 each coordinate UDP-N-acetyl-alpha-D-glucosamine. Threonine 342 contributes to the Mg(2+) binding site.

Belongs to the glycosyltransferase group 1 family. MshA subfamily. Homodimer.

The enzyme catalyses 1D-myo-inositol 3-phosphate + UDP-N-acetyl-alpha-D-glucosamine = 1D-myo-inositol 2-acetamido-2-deoxy-alpha-D-glucopyranoside 3-phosphate + UDP + H(+). Functionally, catalyzes the transfer of a N-acetyl-glucosamine moiety to 1D-myo-inositol 3-phosphate to produce 1D-myo-inositol 2-acetamido-2-deoxy-glucopyranoside 3-phosphate in the mycothiol biosynthesis pathway. This is D-inositol 3-phosphate glycosyltransferase from Kribbella flavida (strain DSM 17836 / JCM 10339 / NBRC 14399).